A 712-amino-acid polypeptide reads, in one-letter code: Small ribosomal subunit protein uS3c (712 aa).

An S3-like 1st part region spans residues 1–118 (MGQKVHPLGF…IKVSKDLVTN (118 aa)). Positions 119–580 (LQKTRKYLFK…LQTAFLTQIE (462 aa)) are intervening sequence (IVS). The S3-like 2nd part stretch occupies residues 581–712 (SQRKMYKANL…VWIFKGYSKI (132 aa)).

Belongs to the universal ribosomal protein uS3 family. Part of the 30S ribosomal subunit.

It localises to the plastid. The protein localises to the chloroplast. The protein is Small ribosomal subunit protein uS3c (rps3) of Chlamydomonas reinhardtii (Chlamydomonas smithii).